We begin with the raw amino-acid sequence, 98 residues long: Lipolysis-activating peptide 1-alpha chain (98 aa).

Residues 1–22 (MMKFVLFGMIVILFSLMGSIRG) form the signal peptide. In terms of domain architecture, LCN-type CS-alpha/beta spans 26-89 (PGNYPTNAYG…IWNAVKNHCT (64 aa)). 3 cysteine pairs are disulfide-bonded: Cys40–Cys63, Cys49–Cys68, and Cys53–Cys70. Asn96 carries the asparagine amide modification.

The protein belongs to the long (3 C-C) scorpion toxin superfamily. As to quaternary structure, monomer (edited version) and heterodimer (non-edited version) of this alpha chain and a beta chain (AC Q95P90). In terms of tissue distribution, expressed by the venom gland.

The protein resides in the secreted. Functionally, the heterodimer non-edited LVP1 induces lipolysis in rat adipocytes. Induction of lipolysis by LVP1 appears to be mediated through the beta-2 adrenergic receptor pathway (ADRB2). The edited BmKBTx, similar to beta-toxins, may modulate voltage-gated sodium channels (Nav) and may block voltage-gated potassium channels (Kv). Seems to be a rare component in the venom. The sequence is that of Lipolysis-activating peptide 1-alpha chain (LVP1a) from Olivierus martensii (Manchurian scorpion).